The sequence spans 218 residues: MVFRRFVEVGRVAYVSFGPHAGKLVAIVDVIDQNRALVDGPCTRVRRQAMPFKCMQLTDFILKFPHSARQKYVRKAWEKADINTKWAATRWAKKIEARERKAKMTDFDRYKVMKAKKMRNRIIKNEVKKLQRAALLKASPKKAPVAKGAVAAAAAAAKVPAKKATAAGKKAAAQKAPAQKAPAQKAAGQKAAQPPKAQKGQKPPAQKAPAPKASGKKA.

The residue at position 79 (K79) is an N6-acetyllysine. N6-acetyllysine; alternate is present on K85. An N6-succinyllysine; alternate modification is found at K85. K124 is covalently cross-linked (Glycyl lysine isopeptide (Lys-Gly) (interchain with G-Cter in SUMO2)). Residue S139 is modified to Phosphoserine. Residues 159 to 218 form a disordered region; sequence VPAKKATAAGKKAAAQKAPAQKAPAQKAAGQKAAQPPKAQKGQKPPAQKAPAPKASGKKA. 6 tandem repeats follow at residues 174–178, 179–183, 184–188, 189–193, 196–198, and 199–201. A 4 X 5 AA tandem repeats of Q-K-A-[PAS]-X region spans residues 174 to 193; that stretch reads QKAPAQKAPAQKAAGQKAAQ. The segment at 196 to 201 is 2 X 3 AA tandem repeats of K-[GA]-Q; that stretch reads KAQKGQ. K207 is subject to N6-succinyllysine.

It belongs to the eukaryotic ribosomal protein eL14 family. In terms of assembly, component of the large ribosomal subunit.

The protein resides in the cytoplasm. Functionally, component of the large ribosomal subunit. The ribosome is a large ribonucleoprotein complex responsible for the synthesis of proteins in the cell. The protein is Large ribosomal subunit protein eL14 (RPL14) of Oryctolagus cuniculus (Rabbit).